Consider the following 311-residue polypeptide: 1,4-dihydroxy-2-naphthoate octaprenyltransferase (311 aa).

9 helical membrane passes run 31 to 51 (LTASFVPVLLGTVLAMFYVKV), 53 to 73 (LLLFLAMLFSCLWIQIATNLF), 104 to 126 (TILQLALASYGIAILLGVYICAS), 131 to 153 (LALIGLVGMAIGYLYTGGPLPIA), 157 to 177 (FGELFSGICMGSVFVLISFFI), 182 to 202 (INMQSILISIPIAILVGAINL), 220 to 240 (LAILMGHKGAVTLLAASFAVA), 242 to 262 (IWVVGLVITGAASPWLFVVFL), and 290 to 310 (TAQTNTFFGFLLSIGLLISYF).

This sequence belongs to the MenA family. Type 1 subfamily.

It localises to the cell membrane. It carries out the reaction an all-trans-polyprenyl diphosphate + 1,4-dihydroxy-2-naphthoate + H(+) = a 2-demethylmenaquinol + CO2 + diphosphate. The protein operates within quinol/quinone metabolism; menaquinone biosynthesis; menaquinol from 1,4-dihydroxy-2-naphthoate: step 1/2. Its function is as follows. Conversion of 1,4-dihydroxy-2-naphthoate (DHNA) to demethylmenaquinone (DMK). This Bacillus subtilis (strain 168) protein is 1,4-dihydroxy-2-naphthoate octaprenyltransferase.